The sequence spans 489 residues: RNA polymerase II subunit 5-mediating protein homolog (489 aa).

Disordered regions lie at residues 141 to 188 (NSDE…MDEE), 200 to 329 (EEKE…EEDE), 396 to 415 (ILKTNSSGNLMSTIPKSYNE), and 434 to 489 (FENQ…RQNK). A compositionally biased stretch (low complexity) spans 157 to 168 (QKSTTTTTTTTT). 2 stretches are compositionally biased toward basic and acidic residues: residues 169-188 (SKDKPKTEEEKKKSKEMDEE) and 215-224 (FNKKFNKKLD). 3 stretches are compositionally biased toward acidic residues: residues 227 to 265 (GSDEEYDDDNYNNNNDDDDDNDEDDDREYYQEEGFEDEK), 276 to 298 (EEDDHDDDDDYYDEGEEIVEYYD), and 315 to 329 (QGDDDNDDNDNEEDE). Residues 396–413 (ILKTNSSGNLMSTIPKSY) are compositionally biased toward polar residues. Over residues 480–489 (SRFKSSRQNK) the composition is skewed to basic residues.

It belongs to the RNA polymerase II subunit 5-mediating protein family.

The protein localises to the nucleus. The sequence is that of RNA polymerase II subunit 5-mediating protein homolog (rmp) from Dictyostelium discoideum (Social amoeba).